The primary structure comprises 333 residues: Coiled-coil domain-containing protein 68 (333 aa).

2 coiled-coil regions span residues 86–120 (LDLLMENMRRKDQQLLEMNRENEVLQIKLEASREA) and 160–302 (EKEQ…HWTE).

As to quaternary structure, interacts with CEP170.

It localises to the cytoplasm. The protein resides in the cytoskeleton. It is found in the microtubule organizing center. Its subcellular location is the centrosome. The protein localises to the centriole. In terms of biological role, centriolar protein required for centriole subdistal appendage assembly and microtubule anchoring in interphase cells. Together with CCDC120, cooperate with subdistal appendage components ODF2, NIN and CEP170 for hierarchical subdistal appendage assembly. This is Coiled-coil domain-containing protein 68 (Ccdc68) from Mus musculus (Mouse).